The chain runs to 92 residues: UPF0223 protein SP_1404 (92 aa).

Belongs to the UPF0223 family.

This Streptococcus pneumoniae serotype 4 (strain ATCC BAA-334 / TIGR4) protein is UPF0223 protein SP_1404.